The following is a 251-amino-acid chain: tRNA-cytidine(32) 2-sulfurtransferase 2 (251 aa).

The short motif at Ser33 to Ser38 is the PP-loop motif element. 3 residues coordinate [4Fe-4S] cluster: Cys108, Cys111, and Cys199.

The protein belongs to the TtcA family. As to quaternary structure, homodimer. Mg(2+) serves as cofactor. [4Fe-4S] cluster is required as a cofactor.

The protein resides in the cytoplasm. It carries out the reaction cytidine(32) in tRNA + S-sulfanyl-L-cysteinyl-[cysteine desulfurase] + AH2 + ATP = 2-thiocytidine(32) in tRNA + L-cysteinyl-[cysteine desulfurase] + A + AMP + diphosphate + H(+). It functions in the pathway tRNA modification. Functionally, catalyzes the ATP-dependent 2-thiolation of cytidine in position 32 of tRNA, to form 2-thiocytidine (s(2)C32). The sulfur atoms are provided by the cysteine/cysteine desulfurase (IscS) system. This chain is tRNA-cytidine(32) 2-sulfurtransferase 2, found in Francisella tularensis subsp. tularensis (strain WY96-3418).